We begin with the raw amino-acid sequence, 368 residues long: Probable ubiquitin receptor RAD23a (368 aa).

The Ubiquitin-like domain occupies 1-77; sequence MKLTVKTLKG…GFLVVMLSKS (77 aa). A compositionally biased stretch (low complexity) spans 80 to 111; it reads ASSAGPSSTQPTSTTTSTISSTTLAAPSTTQS. The disordered stretch occupies residues 80–136; the sequence is ASSAGPSSTQPTSTTTSTISSTTLAAPSTTQSIAVPASNSTPVQEQPTAQSDTYGQA. Polar residues predominate over residues 116-136; it reads ASNSTPVQEQPTAQSDTYGQA. The region spanning 142-185 is the UBA 1 domain; it reads SGSSIEQMVQQIMEMGGGSWDKETVTRALRAAYNNPERAVDYLY. Residues 202-222 are disordered; the sequence is VGSGRELTAPPPSGGPNSSPL. The STI1 domain maps to 239-282; that stretch reads GTLEFLRGNDQFQQLRSMVNSNPQILQPMLQELGKQNPQLLRLI. The UBA 2 domain maps to 320–360; that stretch reads VTPEEQESIERLEAMGFDRAIVIEAFLSCDRNEELAANYLL.

The protein belongs to the RAD23 family. In terms of assembly, interacts with 'Lys-48'-linked polyubiquitin chains. Interacts with RPN10. Widely expressed in the whole plant.

It localises to the nucleus. The protein resides in the cytoplasm. Functionally, may be involved in nucleotide excision repair. Binds and presumably selects ubiquitin-conjugates for destruction. Prefers multiubiquitin chains rather than single ubiquitins, with a binding affinity for 'Lys-48'-linked ubiquitin chains. Acts as a ubiquitin receptor that associates with the 26S proteasomal docking subunit RPN10 for the indirect recognition of ubiquitinated substrates of ubiquitin/26S proteasome-mediated proteolysis (UPP). Involved in UV tolerance in roots, specifically in dark conditions. In Arabidopsis thaliana (Mouse-ear cress), this protein is Probable ubiquitin receptor RAD23a.